Here is a 211-residue protein sequence, read N- to C-terminus: Histidine biosynthesis bifunctional protein HisIE (211 aa).

The interval 1-117 (MSTQTNTKSD…CWLDGNAHPF (117 aa)) is phosphoribosyl-AMP cyclohydrolase. Positions 118-211 (LNNLAELIAS…LARHQKAQRK (94 aa)) are phosphoribosyl-ATP pyrophosphohydrolase.

The protein in the N-terminal section; belongs to the PRA-CH family. In the C-terminal section; belongs to the PRA-PH family.

The protein localises to the cytoplasm. The catalysed reaction is 1-(5-phospho-beta-D-ribosyl)-ATP + H2O = 1-(5-phospho-beta-D-ribosyl)-5'-AMP + diphosphate + H(+). It catalyses the reaction 1-(5-phospho-beta-D-ribosyl)-5'-AMP + H2O = 1-(5-phospho-beta-D-ribosyl)-5-[(5-phospho-beta-D-ribosylamino)methylideneamino]imidazole-4-carboxamide. It functions in the pathway amino-acid biosynthesis; L-histidine biosynthesis; L-histidine from 5-phospho-alpha-D-ribose 1-diphosphate: step 2/9. The protein operates within amino-acid biosynthesis; L-histidine biosynthesis; L-histidine from 5-phospho-alpha-D-ribose 1-diphosphate: step 3/9. This chain is Histidine biosynthesis bifunctional protein HisIE, found in Shewanella oneidensis (strain ATCC 700550 / JCM 31522 / CIP 106686 / LMG 19005 / NCIMB 14063 / MR-1).